The primary structure comprises 385 residues: DNA replication and repair protein RecF (385 aa).

Residue 30 to 37 participates in ATP binding; that stretch reads GPNGYGKT.

The protein belongs to the RecF family.

Its subcellular location is the cytoplasm. In terms of biological role, the RecF protein is involved in DNA metabolism; it is required for DNA replication and normal SOS inducibility. RecF binds preferentially to single-stranded, linear DNA. It also seems to bind ATP. The sequence is that of DNA replication and repair protein RecF from Mycobacterium bovis (strain ATCC BAA-935 / AF2122/97).